The primary structure comprises 269 residues: Formamidopyrimidine-DNA glycosylase (269 aa).

Proline 2 acts as the Schiff-base intermediate with DNA in catalysis. Catalysis depends on glutamate 3, which acts as the Proton donor. Lysine 57 (proton donor; for beta-elimination activity) is an active-site residue. Residues histidine 90, arginine 109, and arginine 150 each contribute to the DNA site. The FPG-type zinc-finger motif lies at 235-269; it reads NVYGRKGEPCEACGKAIESKVIGQRNTFFCTRCQR. Catalysis depends on arginine 259, which acts as the Proton donor; for delta-elimination activity.

The protein belongs to the FPG family. Monomer. Requires Zn(2+) as cofactor.

It catalyses the reaction Hydrolysis of DNA containing ring-opened 7-methylguanine residues, releasing 2,6-diamino-4-hydroxy-5-(N-methyl)formamidopyrimidine.. The enzyme catalyses 2'-deoxyribonucleotide-(2'-deoxyribose 5'-phosphate)-2'-deoxyribonucleotide-DNA = a 3'-end 2'-deoxyribonucleotide-(2,3-dehydro-2,3-deoxyribose 5'-phosphate)-DNA + a 5'-end 5'-phospho-2'-deoxyribonucleoside-DNA + H(+). Involved in base excision repair of DNA damaged by oxidation or by mutagenic agents. Acts as a DNA glycosylase that recognizes and removes damaged bases. Has a preference for oxidized purines, such as 7,8-dihydro-8-oxoguanine (8-oxoG). Has AP (apurinic/apyrimidinic) lyase activity and introduces nicks in the DNA strand. Cleaves the DNA backbone by beta-delta elimination to generate a single-strand break at the site of the removed base with both 3'- and 5'-phosphates. This chain is Formamidopyrimidine-DNA glycosylase, found in Alteromonas mediterranea (strain DSM 17117 / CIP 110805 / LMG 28347 / Deep ecotype).